Reading from the N-terminus, the 299-residue chain is Acetylglutamate kinase (299 aa).

Residues 70-71, R92, and N186 contribute to the substrate site; that span reads GG.

The protein belongs to the acetylglutamate kinase family. ArgB subfamily.

It localises to the cytoplasm. It catalyses the reaction N-acetyl-L-glutamate + ATP = N-acetyl-L-glutamyl 5-phosphate + ADP. It participates in amino-acid biosynthesis; L-arginine biosynthesis; N(2)-acetyl-L-ornithine from L-glutamate: step 2/4. In terms of biological role, catalyzes the ATP-dependent phosphorylation of N-acetyl-L-glutamate. The protein is Acetylglutamate kinase of Caldanaerobacter subterraneus subsp. tengcongensis (strain DSM 15242 / JCM 11007 / NBRC 100824 / MB4) (Thermoanaerobacter tengcongensis).